The chain runs to 349 residues: Selenide, water dikinase (349 aa).

Residue U19 is part of the active site. A non-standard amino acid (selenocysteine) is located at residue U19. Residues K22 and 50–52 contribute to the ATP site; that span reads LGD. D53 provides a ligand contact to Mg(2+). ATP-binding positions include D69, D92, and 140-142; that span reads GHT. D92 is a Mg(2+) binding site. D246 is a binding site for Mg(2+).

It belongs to the selenophosphate synthase 1 family. Class I subfamily. Homodimer. Mg(2+) serves as cofactor.

It carries out the reaction hydrogenselenide + ATP + H2O = selenophosphate + AMP + phosphate + 2 H(+). Its function is as follows. Synthesizes selenophosphate from selenide and ATP. The polypeptide is Selenide, water dikinase (Methanocaldococcus jannaschii (strain ATCC 43067 / DSM 2661 / JAL-1 / JCM 10045 / NBRC 100440) (Methanococcus jannaschii)).